Here is a 635-residue protein sequence, read N- to C-terminus: Cytoplasmic polyadenylation element-binding protein 4 (635 aa).

Disordered regions lie at residues 1–70 (MQDD…TLRL), 149–284 (GFGG…GFNT), and 337–369 (LFPM…PHQN). Residues 14-30 (PQLQQESQEGQDKQTLS) show a composition bias toward polar residues. Over residues 166–182 (PSPHPHFQHPHNQHRRS) the composition is skewed to basic residues. A compositionally biased stretch (low complexity) spans 216–231 (GSYQSPSSTPSSTSWS). Gly residues predominate over residues 232–241 (PGGGYGGWGS). The segment covering 254 to 283 (PLNSISPLKKSFPNNQTQTQKYPRNNSGFN) has biased composition (polar residues). Residues 341–353 (EDERSYGEDERSD) show a composition bias toward basic and acidic residues. 2 consecutive RRM domains span residues 378–469 (RKVF…PWNL) and 486–568 (KTIF…PYVL).

Belongs to the RRM CPEB family.

It localises to the cytoplasm. Its subcellular location is the cell projection. The protein resides in the dendrite. The protein localises to the dendritic spine. It is found in the postsynaptic density. It localises to the axon. Its subcellular location is the growth cone. The protein resides in the endoplasmic reticulum. The protein localises to the perinuclear region. Sequence-specific RNA-binding protein that binds to the cytoplasmic polyadenylation element (CPE), an uridine-rich sequence element (consensus sequence 5'-UUUUUAU-3') within the mRNA 3'-UTR. RNA binding results in a clear conformational change analogous to the Venus fly trap mechanism. This is Cytoplasmic polyadenylation element-binding protein 4 (cpeb4) from Danio rerio (Zebrafish).